The following is an 824-amino-acid chain: Molybdenum cofactor sulfurase (824 aa).

N6-(pyridoxal phosphate)lysine is present on lysine 274. The active site involves cysteine 433. An MOSC domain is found at 655–822 (CSSSKYRSCT…LQVGQQVYPS (168 aa)).

It belongs to the class-V pyridoxal-phosphate-dependent aminotransferase family. MOCOS subfamily. It depends on pyridoxal 5'-phosphate as a cofactor.

The enzyme catalyses Mo-molybdopterin + L-cysteine + AH2 = thio-Mo-molybdopterin + L-alanine + A + H2O. It functions in the pathway cofactor biosynthesis; molybdopterin biosynthesis. Its function is as follows. Sulfurates the molybdenum cofactor. Sulfation of molybdenum is essential for xanthine dehydrogenase (XDH) and aldehyde oxidase (ADO) enzymes in which molybdenum cofactor is liganded by 1 oxygen and 1 sulfur atom in active form. This Oryza sativa subsp. japonica (Rice) protein is Molybdenum cofactor sulfurase (MCSU3).